The following is a 417-amino-acid chain: Serine--tRNA ligase (417 aa).

232-234 (TAE) contacts L-serine. An ATP-binding site is contributed by 263–265 (RKE). Glu286 serves as a coordination point for L-serine. Residue 350–353 (EISS) coordinates ATP. Residue Ser385 participates in L-serine binding.

The protein belongs to the class-II aminoacyl-tRNA synthetase family. Type-1 seryl-tRNA synthetase subfamily. Homodimer. The tRNA molecule binds across the dimer.

The protein resides in the cytoplasm. It carries out the reaction tRNA(Ser) + L-serine + ATP = L-seryl-tRNA(Ser) + AMP + diphosphate + H(+). It catalyses the reaction tRNA(Sec) + L-serine + ATP = L-seryl-tRNA(Sec) + AMP + diphosphate + H(+). The protein operates within aminoacyl-tRNA biosynthesis; selenocysteinyl-tRNA(Sec) biosynthesis; L-seryl-tRNA(Sec) from L-serine and tRNA(Sec): step 1/1. In terms of biological role, catalyzes the attachment of serine to tRNA(Ser). Is also able to aminoacylate tRNA(Sec) with serine, to form the misacylated tRNA L-seryl-tRNA(Sec), which will be further converted into selenocysteinyl-tRNA(Sec). This Sulfurihydrogenibium sp. (strain YO3AOP1) protein is Serine--tRNA ligase.